Reading from the N-terminus, the 527-residue chain is Peptide chain release factor 3 (527 aa).

Residues 9-277 (AKRRTFAIIS…AVVNWAPKPL (269 aa)) enclose the tr-type G domain. GTP-binding positions include 18–25 (SHPDAGKT), 86–90 (DTPGH), and 140–143 (NKLD).

It belongs to the TRAFAC class translation factor GTPase superfamily. Classic translation factor GTPase family. PrfC subfamily.

It localises to the cytoplasm. Its function is as follows. Increases the formation of ribosomal termination complexes and stimulates activities of RF-1 and RF-2. It binds guanine nucleotides and has strong preference for UGA stop codons. It may interact directly with the ribosome. The stimulation of RF-1 and RF-2 is significantly reduced by GTP and GDP, but not by GMP. This Pseudomonas savastanoi pv. phaseolicola (strain 1448A / Race 6) (Pseudomonas syringae pv. phaseolicola (strain 1448A / Race 6)) protein is Peptide chain release factor 3.